We begin with the raw amino-acid sequence, 455 residues long: Chromosomal replication initiator protein DnaA (455 aa).

Residues 1 to 74 (MSEQEIWEKV…LYEAIGHEIA (74 aa)) are domain I, interacts with DnaA modulators. The tract at residues 74-116 (APVFYTEEELKSLHTSEQKEENQPEQPAKKYTPGVDEAVIGGE) is domain II. Over residues 85–95 (SLHTSEQKEEN) the composition is skewed to basic and acidic residues. Positions 85-104 (SLHTSEQKEENQPEQPAKKY) are disordered. The domain III, AAA+ region stretch occupies residues 117–333 (QFNTHNTFET…GALTRVLAFS (217 aa)). Residues Gly161, Gly163, Lys164, and Thr165 each coordinate ATP. Residues 334–455 (KLQGQPITTE…ENLEKEIRNQ (122 aa)) are domain IV, binds dsDNA.

It belongs to the DnaA family. Oligomerizes as a right-handed, spiral filament on DNA at oriC.

The protein resides in the cytoplasm. In terms of biological role, plays an essential role in the initiation and regulation of chromosomal replication. ATP-DnaA binds to the origin of replication (oriC) to initiate formation of the DNA replication initiation complex once per cell cycle. Binds the DnaA box (a 9 base pair repeat at the origin) and separates the double-stranded (ds)DNA. Forms a right-handed helical filament on oriC DNA; dsDNA binds to the exterior of the filament while single-stranded (ss)DNA is stabiized in the filament's interior. The ATP-DnaA-oriC complex binds and stabilizes one strand of the AT-rich DNA unwinding element (DUE), permitting loading of DNA polymerase. After initiation quickly degrades to an ADP-DnaA complex that is not apt for DNA replication. Binds acidic phospholipids. The chain is Chromosomal replication initiator protein DnaA from Staphylococcus saprophyticus subsp. saprophyticus (strain ATCC 15305 / DSM 20229 / NCIMB 8711 / NCTC 7292 / S-41).